Consider the following 359-residue polypeptide: Pyruvate dehydrogenase E1 component subunit beta, mitochondrial (359 aa).

The transit peptide at 1-30 (MAAVSGLVRRPLREVSGLLKRRFHWTAPAA) directs the protein to the mitochondrion. Tyrosine 67 carries the post-translational modification Phosphotyrosine. Glutamate 89 lines the thiamine diphosphate pocket. K(+)-binding residues include isoleucine 142, alanine 190, isoleucine 191, aspartate 193, and asparagine 195. Position 354 is an N6-acetyllysine (lysine 354).

Heterotetramer of two PDHA1 and two PDHB subunits. The heterotetramer interacts with DLAT, and is part of the multimeric pyruvate dehydrogenase complex that contains multiple copies of pyruvate dehydrogenase (E1), dihydrolipoamide acetyltransferase (DLAT, E2) and lipoamide dehydrogenase (DLD, E3). These subunits are bound to an inner core composed of about 48 DLAT and 12 PDHX molecules. Interacts with DLAT. Requires thiamine diphosphate as cofactor.

It is found in the mitochondrion matrix. The catalysed reaction is N(6)-[(R)-lipoyl]-L-lysyl-[protein] + pyruvate + H(+) = N(6)-[(R)-S(8)-acetyldihydrolipoyl]-L-lysyl-[protein] + CO2. The pyruvate dehydrogenase complex catalyzes the overall conversion of pyruvate to acetyl-CoA and CO(2), and thereby links the glycolytic pathway to the tricarboxylic cycle. The chain is Pyruvate dehydrogenase E1 component subunit beta, mitochondrial (PDHB) from Homo sapiens (Human).